Consider the following 921-residue polypeptide: Isoleucine--tRNA ligase (921 aa).

Positions 57–67 (PYANGDIHMGH) match the 'HIGH' region motif. E552 contacts L-isoleucyl-5'-AMP. A 'KMSKS' region motif is present at residues 593–597 (KMSKS). An ATP-binding site is contributed by K596. 4 residues coordinate Zn(2+): C888, C891, C908, and C911.

Belongs to the class-I aminoacyl-tRNA synthetase family. IleS type 1 subfamily. In terms of assembly, monomer. Zn(2+) serves as cofactor.

It is found in the cytoplasm. It carries out the reaction tRNA(Ile) + L-isoleucine + ATP = L-isoleucyl-tRNA(Ile) + AMP + diphosphate. In terms of biological role, catalyzes the attachment of isoleucine to tRNA(Ile). As IleRS can inadvertently accommodate and process structurally similar amino acids such as valine, to avoid such errors it has two additional distinct tRNA(Ile)-dependent editing activities. One activity is designated as 'pretransfer' editing and involves the hydrolysis of activated Val-AMP. The other activity is designated 'posttransfer' editing and involves deacylation of mischarged Val-tRNA(Ile). This chain is Isoleucine--tRNA ligase, found in Bacillus cereus (strain AH820).